Reading from the N-terminus, the 499-residue chain is Glycerol kinase (499 aa).

ADP is bound at residue threonine 14. The ATP site is built by threonine 14, threonine 15, and serine 16. Threonine 14 contributes to the sn-glycerol 3-phosphate binding site. Arginine 18 is an ADP binding site. Sn-glycerol 3-phosphate-binding residues include arginine 84, glutamate 85, tyrosine 136, and aspartate 245. Glycerol-binding residues include arginine 84, glutamate 85, tyrosine 136, aspartate 245, and glutamine 246. ADP-binding residues include threonine 267 and glycine 310. Threonine 267, glycine 310, glutamine 314, and glycine 411 together coordinate ATP. 2 residues coordinate ADP: glycine 411 and asparagine 415.

It belongs to the FGGY kinase family.

It catalyses the reaction glycerol + ATP = sn-glycerol 3-phosphate + ADP + H(+). It participates in polyol metabolism; glycerol degradation via glycerol kinase pathway; sn-glycerol 3-phosphate from glycerol: step 1/1. Inhibited by fructose 1,6-bisphosphate (FBP). Functionally, key enzyme in the regulation of glycerol uptake and metabolism. Catalyzes the phosphorylation of glycerol to yield sn-glycerol 3-phosphate. This Nitrosomonas eutropha (strain DSM 101675 / C91 / Nm57) protein is Glycerol kinase.